The following is a 354-amino-acid chain: UPF0283 membrane protein Meso_1416 (354 aa).

Positions 1-28 are disordered; that stretch reads MSEPRRPAAFRIEPAPSPSPEATREDVR. The next 2 helical transmembrane spans lie at 71–91 and 105–125; these read LGAV…GLWA and LGWL…AIVV.

It belongs to the UPF0283 family.

It localises to the cell inner membrane. The sequence is that of UPF0283 membrane protein Meso_1416 from Chelativorans sp. (strain BNC1).